We begin with the raw amino-acid sequence, 692 residues long: Sulfhydryl oxidase 2 (692 aa).

Positions 1–38 (MAAARAVARDPGAYARQPPSLRAARLPRLLFLLAVVAA) are cleaved as a signal peptide. Residues 54 to 172 (SDAVWLLDSG…RQTMIDFLQN (119 aa)) enclose the Thioredoxin domain. Asparagine 71 carries an N-linked (GlcNAc...) asparagine glycan. Catalysis depends on nucleophile residues cysteine 85 and cysteine 88. 2 disulfide bridges follow: cysteine 85–cysteine 88 and cysteine 116–cysteine 125. N-linked (GlcNAc...) asparagine glycans are attached at residues asparagine 172, asparagine 212, and asparagine 260. Cysteine 412 and cysteine 424 are disulfide-bonded. The 110-residue stretch at 415–524 (SRLELRGYPC…EDPKFPKVPW (110 aa)) folds into the ERV/ALR sulfhydryl oxidase domain. Residues arginine 420, tryptophan 427, histidine 431, glutamate 472, histidine 476, 499-506 (WRKHNMVN), lysine 521, and tryptophan 524 each bind FAD. An intrachain disulfide couples cysteine 470 to cysteine 473. Cysteine 530 and cysteine 533 are joined by a disulfide. A disordered region spans residues 568–607 (DQGSPGEWEAQGREQEEGKGLNPSGKSWRHHDTGSLRPPH). Residues 577–586 (AQGREQEEGK) are compositionally biased toward basic and acidic residues. Residues 656-676 (SLCVVLYVASSLFLMIMYFFF) form a helical membrane-spanning segment.

The protein belongs to the quiescin-sulfhydryl oxidase (QSOX) family. FAD serves as cofactor.

It is found in the membrane. The enzyme catalyses 2 R'C(R)SH + O2 = R'C(R)S-S(R)CR' + H2O2. Catalyzes the oxidation of sulfhydryl groups in peptide and protein thiols to disulfides with the reduction of oxygen to hydrogen peroxide. May contribute to disulfide bond formation in a variety of secreted proteins. The sequence is that of Sulfhydryl oxidase 2 (Qsox2) from Mus musculus (Mouse).